Reading from the N-terminus, the 751-residue chain is Protein WEAK CHLOROPLAST MOVEMENT UNDER BLUE LIGHT-like 3 (751 aa).

At serine 113 the chain carries Phosphoserine. Coiled-coil stretches lie at residues 165 to 558 (ERRK…ALQE) and 588 to 647 (QALE…KARD). Composition is skewed to basic and acidic residues over residues 455–467 (RERQDLEETKQKE) and 625–689 (NREM…RNKE). Disordered regions lie at residues 455 to 479 (RERQDLEETKQKESTGLARTNDKDA) and 625 to 751 (NREM…HSHK). The segment covering 704–723 (GSSSNNTGGSTTTNNNNLTP) has biased composition (low complexity).

The protein belongs to the WEB family.

This is Protein WEAK CHLOROPLAST MOVEMENT UNDER BLUE LIGHT-like 3 (WEL3) from Arabidopsis thaliana (Mouse-ear cress).